Consider the following 331-residue polypeptide: Tryptophan--tRNA ligase 1 (331 aa).

Residues 9-11 (KPT) and 17-18 (GN) each bind ATP. The short motif at 10-18 (PTGHLTLGN) is the 'HIGH' region element. Asp-137 lines the L-tryptophan pocket. ATP is bound by residues 149–151 (GDD), Val-188, and 197–201 (KMGKS). A 'KMSKS' region motif is present at residues 197–201 (KMGKS).

The protein belongs to the class-I aminoacyl-tRNA synthetase family. Homodimer.

Its subcellular location is the cytoplasm. The catalysed reaction is tRNA(Trp) + L-tryptophan + ATP = L-tryptophyl-tRNA(Trp) + AMP + diphosphate + H(+). Its function is as follows. Catalyzes the attachment of tryptophan to tRNA(Trp). The protein is Tryptophan--tRNA ligase 1 of Streptomyces avermitilis (strain ATCC 31267 / DSM 46492 / JCM 5070 / NBRC 14893 / NCIMB 12804 / NRRL 8165 / MA-4680).